Here is a 200-residue protein sequence, read N- to C-terminus: Dephospho-CoA kinase (200 aa).

Residues 3 to 200 form the DPCK domain; the sequence is VIGLTGGIGS…KKYMTLAQGS (198 aa). 11 to 16 is an ATP binding site; it reads GSGKTS.

It belongs to the CoaE family.

It localises to the cytoplasm. The enzyme catalyses 3'-dephospho-CoA + ATP = ADP + CoA + H(+). Its pathway is cofactor biosynthesis; coenzyme A biosynthesis; CoA from (R)-pantothenate: step 5/5. In terms of biological role, catalyzes the phosphorylation of the 3'-hydroxyl group of dephosphocoenzyme A to form coenzyme A. This is Dephospho-CoA kinase from Nitrosospira multiformis (strain ATCC 25196 / NCIMB 11849 / C 71).